The sequence spans 158 residues: Large ribosomal subunit protein uL11 (158 aa).

Belongs to the universal ribosomal protein uL11 family. Part of the ribosomal stalk of the 50S ribosomal subunit. Interacts with L10 and the large rRNA to form the base of the stalk. L10 forms an elongated spine to which L12 dimers bind in a sequential fashion forming a multimeric L10(L12)X complex.

Forms part of the ribosomal stalk which helps the ribosome interact with GTP-bound translation factors. This chain is Large ribosomal subunit protein uL11, found in Methanocella arvoryzae (strain DSM 22066 / NBRC 105507 / MRE50).